Here is a 1481-residue protein sequence, read N- to C-terminus: Cystic fibrosis transmembrane conductance regulator (1481 aa).

At 1-77 the chain is on the cytoplasmic side; sequence MQRSPLEKAS…KLINALRRCF (77 aa). Residues 78–98 form a helical membrane-spanning segment; sequence FWRFMFYGILLYLGEVTKAVQ. An ABC transmembrane type-1 1 domain is found at 81–365; the sequence is FMFYGILLYL…WAVQTWYDSL (285 aa). The Extracellular segment spans residues 99–122; that stretch reads PLLLGRIIASYDPDNKEERSIAIY. Residues 123-146 form a helical membrane-spanning segment; that stretch reads LGIGLCLLFIVRTLLLHPAIFGLH. Topologically, residues 147 to 195 are cytoplasmic; that stretch reads HIGMQMRIAMFSLIYKKTLKLSSRVLDKISIGQLVSLLSNNLNKFDEGL. A helical membrane pass occupies residues 196–216; that stretch reads ALAHFVWIVPLQVALLMGLIW. Residues 217–222 are Extracellular-facing; that stretch reads ELLQAS. A helical transmembrane segment spans residues 223-243; it reads AFCGLGFLIVLALFQAGLGRM. The Cytoplasmic segment spans residues 244–298; it reads MMKYRDQRAGKINERLVITSEMIENIQSVKAYCWEEAMEKMIENLRQTELKLTRK. A helical membrane pass occupies residues 299–319; that stretch reads AAYVRYFNSSAFFFSGFFVVF. At 320 to 339 the chain is on the extracellular side; that stretch reads LSVLPYALIKGIVLRKIFTT. Residues 340–358 traverse the membrane as a helical segment; sequence ISFCIVLRMAVTRQFPWAV. Residues 359–858 are Cytoplasmic-facing; it reads QTWYDSLGAI…YLRYITVHKS (500 aa). Residues Trp-401, Ser-434, 458–465, and Gln-493 contribute to the ATP site; that span reads GSTGAGKT. Residues 423–646 enclose the ABC transporter 1 domain; the sequence is NDDDSLFFSN…RPDFSSKLMG (224 aa). Cys-524 carries S-palmitoyl cysteine lipidation. Residues Ser-549 and Ser-660 each carry the phosphoserine modification. Residues 654–831 form a disordered R region region; sequence SAERRNSILT…EEINEEDLKE (178 aa). A Phosphoserine; by PKA modification is found at Ser-670. Ser-686 is modified (phosphoserine). Residue Lys-688 forms a Glycyl lysine isopeptide (Lys-Gly) (interchain with G-Cter in ubiquitin) linkage. Ser-700 and Ser-712 each carry phosphoserine. A Phosphothreonine modification is found at Thr-717. Phosphoserine is present on residues Ser-737, Ser-753, Ser-768, Ser-790, Ser-795, and Ser-813. The helical transmembrane segment at 859 to 879 threads the bilayer; that stretch reads LIFVLIWCLVIFLAEVAASLV. Positions 859–1155 constitute an ABC transmembrane type-1 2 domain; the sequence is LIFVLIWCLV…AVNSSIDVDS (297 aa). The Extracellular portion of the chain corresponds to 880–918; the sequence is VLWFLGNTPPQDKGNSTYSRNNSYAVIITRTSSYYVFYI. N-linked (GlcNAc...) asparagine glycosylation is found at Asn-894 and Asn-900. The discontinuously helical transmembrane segment at 919–939 threads the bilayer; the sequence is YVGVADTLLAMGFFRGLPLVH. The Cytoplasmic segment spans residues 940 to 990; it reads TLITVSKILHHKMLHSVLQAPMSTLNTLKAGGILNRFSKDIAILDDLLPLT. A helical membrane pass occupies residues 991–1011; that stretch reads IFDFIQLLLIVIGAIAVVAVL. Over 1012–1013 the chain is Extracellular; that stretch reads QP. A helical transmembrane segment spans residues 1014–1034; sequence YIFVATVPVIVAFIMLRAYFL. Residues 1035-1095 lie on the Cytoplasmic side of the membrane; sequence QTSQQLKQLE…TANWFLYLST (61 aa). Residues 1096 to 1116 form a helical membrane-spanning segment; sequence LRWFQMRIEMIFVIFFIAVTF. The Extracellular portion of the chain corresponds to 1117–1130; that stretch reads ISILTTGEGEGTVG. Residues 1131–1151 form a helical membrane-spanning segment; the sequence is IILTLAMNIMSTLQWAVNSSI. Over 1152-1481 the chain is Cytoplasmic; the sequence is DVDSLMRSVS…TEEEVQDTRL (330 aa). Positions 1211-1444 constitute an ABC transporter 2 domain; that stretch reads MTVKDLTAKY…RSLFRQAISP (234 aa). ATP is bound by residues Tyr-1220 and 1245 to 1252; that span reads GRTGSGKS. Residues 1387–1481 are interaction with GORASP2; the sequence is RTLKQAFADC…TEEEVQDTRL (95 aa). Cys-1396 is lipidated: S-palmitoyl cysteine. Residues Ser-1445 and Ser-1457 each carry the phosphoserine modification. The segment at 1462–1481 is disordered; the sequence is QPQIAALKEETEEEVQDTRL. Acidic residues predominate over residues 1471-1481; sequence ETEEEVQDTRL. A PDZ-binding motif is present at residues 1479–1481; the sequence is TRL.

It belongs to the ABC transporter superfamily. ABCC family. CFTR transporter (TC 3.A.1.202) subfamily. In terms of assembly, monomer; does not require oligomerization for channel activity. May form oligomers in the membrane. Interacts with SLC26A3, SLC26A6 and NHERF1. Interacts with SHANK2. Interacts with MYO6. Interacts (via C-terminus) with GOPC (via PDZ domain); this promotes CFTR internalization and thereby decreases channel activity. Interacts with SLC4A7 through NHERF1. Found in a complex with MYO5B and RAB11A. Interacts with ANO1. Interacts with SLC26A8. Interacts with AHCYL1; the interaction increases CFTR activity. Interacts with CSE1L. The core-glycosylated form interacts with GORASP2 (via PDZ GRASP-type 1 domain) in respone to ER stress. Interacts with MARCHF2; the interaction leads to CFTR ubiqtuitination and degradation. Interacts with ADGRG2. In terms of processing, N-glycosylated. Phosphorylated; cAMP treatment promotes phosphorylation and activates the channel. Dephosphorylation decreases the ATPase activity (in vitro). Phosphorylation at PKA sites activates the channel. Phosphorylation at PKC sites enhances the response to phosphorylation by PKA. Phosphorylated by AMPK; this inhibits channel activity. Post-translationally, ubiquitinated, leading to its degradation in the lysosome. Deubiquitination by USP10 in early endosomes enhances its endocytic recycling to the cell membrane. Ubiquitinated by RNF185 during ER stress. Ubiquitinated by MARCHF2.

The protein resides in the apical cell membrane. The protein localises to the early endosome membrane. Its subcellular location is the cell membrane. It is found in the recycling endosome membrane. It localises to the endoplasmic reticulum membrane. The protein resides in the nucleus. The catalysed reaction is ATP + H2O + closed Cl(-) channel = ADP + phosphate + open Cl(-) channel.. It carries out the reaction chloride(in) = chloride(out). It catalyses the reaction hydrogencarbonate(in) = hydrogencarbonate(out). The enzyme catalyses ATP + H2O = ADP + phosphate + H(+). Epithelial ion channel that plays an important role in the regulation of epithelial ion and water transport and fluid homeostasis. Mediates the transport of chloride ions across the cell membrane. Possesses an intrinsic ATPase activity and utilizes ATP to gate its channel; the passive flow of anions through the channel is gated by cycles of ATP binding and hydrolysis by the ATP-binding domains. The ion channel is also permeable to HCO(3)(-); selectivity depends on the extracellular chloride concentration. Exerts its function also by modulating the activity of other ion channels and transporters. Contributes to the regulation of the pH and the ion content of the epithelial fluid layer. Modulates the activity of the epithelial sodium channel (ENaC) complex, in part by regulating the cell surface expression of the ENaC complex. May regulate bicarbonate secretion and salvage in epithelial cells by regulating the transporter SLC4A7. Can inhibit the chloride channel activity of ANO1. Plays a role in the chloride and bicarbonate homeostasis during sperm epididymal maturation and capacitation. This is Cystic fibrosis transmembrane conductance regulator from Chlorocebus aethiops (Green monkey).